The chain runs to 277 residues: Large ribosomal subunit protein uL2 (277 aa).

The disordered stretch occupies residues 216–277 (RRPHNRGVAM…IIRRRKVGKG (62 aa)).

The protein belongs to the universal ribosomal protein uL2 family. In terms of assembly, part of the 50S ribosomal subunit. Forms a bridge to the 30S subunit in the 70S ribosome.

One of the primary rRNA binding proteins. Required for association of the 30S and 50S subunits to form the 70S ribosome, for tRNA binding and peptide bond formation. It has been suggested to have peptidyltransferase activity; this is somewhat controversial. Makes several contacts with the 16S rRNA in the 70S ribosome. The chain is Large ribosomal subunit protein uL2 from Acidiphilium cryptum (strain JF-5).